A 611-amino-acid chain; its full sequence is uncharacterized protein (611 aa).

It belongs to the metallo-dependent hydrolases superfamily. N-acyl-D-amino-acid deacylase family.

This is an uncharacterized protein from Mycobacterium bovis (strain ATCC BAA-935 / AF2122/97).